A 213-amino-acid polypeptide reads, in one-letter code: Nicolin-1 (213 aa).

As to quaternary structure, part of the neuronal tubulin polyglutamylase complex which contains TPGS1, TPGS2, TTLL1, LRRC49 and NICN1. High expression level is found in brain, testis, liver and kidney. Weak expression in spleen, leukocytes, small intestin and colon.

It localises to the nucleus. This Mus musculus (Mouse) protein is Nicolin-1 (Nicn1).